Here is a 143-residue protein sequence, read N- to C-terminus: Large ribosomal subunit protein uL15 (143 aa).

A disordered region spans residues 1–59 (MELNGIKPSLGAKHAKRRVGRGIGSGLGKTAGRGHKGQKSRAGGYHKVGFEGGQMPMQR). Over residues 21–31 (RGIGSGLGKTA) the composition is skewed to gly residues.

The protein belongs to the universal ribosomal protein uL15 family. As to quaternary structure, part of the 50S ribosomal subunit.

In terms of biological role, binds to the 23S rRNA. The chain is Large ribosomal subunit protein uL15 from Polaromonas sp. (strain JS666 / ATCC BAA-500).